A 577-amino-acid chain; its full sequence is Arginine--tRNA ligase (577 aa).

Residues 132 to 142 (ANPTGPLHVGH) carry the 'HIGH' region motif.

It belongs to the class-I aminoacyl-tRNA synthetase family. In terms of assembly, monomer.

It localises to the cytoplasm. The enzyme catalyses tRNA(Arg) + L-arginine + ATP = L-arginyl-tRNA(Arg) + AMP + diphosphate. This Janthinobacterium sp. (strain Marseille) (Minibacterium massiliensis) protein is Arginine--tRNA ligase.